The chain runs to 553 residues: Dihydrolipoyllysine-residue acetyltransferase component of pyruvate dehydrogenase complex (553 aa).

One can recognise a Lipoyl-binding 1 domain in the interval Ala4 to Glu78. Residue Lys44 is modified to N6-lipoyllysine. A disordered region spans residues Ala97–Gly118. One can recognise a Lipoyl-binding 2 domain in the interval Thr122–Glu196. At Lys162 the chain carries N6-lipoyllysine. A Peripheral subunit-binding (PSBD) domain is found at His250–Val287. His526 is an active-site residue.

It belongs to the 2-oxoacid dehydrogenase family. In terms of assembly, forms a 24-polypeptide structural core with octahedral symmetry. (R)-lipoate is required as a cofactor.

It carries out the reaction N(6)-[(R)-dihydrolipoyl]-L-lysyl-[protein] + acetyl-CoA = N(6)-[(R)-S(8)-acetyldihydrolipoyl]-L-lysyl-[protein] + CoA. The pyruvate dehydrogenase complex catalyzes the overall conversion of pyruvate to acetyl-CoA and CO(2). It contains multiple copies of three enzymatic components: pyruvate dehydrogenase (E1), dihydrolipoamide acetyltransferase (E2) and lipoamide dehydrogenase (E3). The protein is Dihydrolipoyllysine-residue acetyltransferase component of pyruvate dehydrogenase complex (pdhB) of Cupriavidus necator (strain ATCC 17699 / DSM 428 / KCTC 22496 / NCIMB 10442 / H16 / Stanier 337) (Ralstonia eutropha).